The chain runs to 1361 residues: DNA-directed RNA polymerase subunit beta'' (1361 aa).

Positions 224, 295, 302, and 305 each coordinate Zn(2+).

The protein belongs to the RNA polymerase beta' chain family. RpoC2 subfamily. In terms of assembly, in plastids the minimal PEP RNA polymerase catalytic core is composed of four subunits: alpha, beta, beta', and beta''. When a (nuclear-encoded) sigma factor is associated with the core the holoenzyme is formed, which can initiate transcription. Requires Zn(2+) as cofactor.

It localises to the plastid. It is found in the chloroplast. The catalysed reaction is RNA(n) + a ribonucleoside 5'-triphosphate = RNA(n+1) + diphosphate. Functionally, DNA-dependent RNA polymerase catalyzes the transcription of DNA into RNA using the four ribonucleoside triphosphates as substrates. This Spinacia oleracea (Spinach) protein is DNA-directed RNA polymerase subunit beta''.